The primary structure comprises 78 residues: Small ribosomal subunit protein bS16c (78 aa).

This sequence belongs to the bacterial ribosomal protein bS16 family.

It is found in the plastid. It localises to the chloroplast. This Adiantum capillus-veneris (Maidenhair fern) protein is Small ribosomal subunit protein bS16c.